A 575-amino-acid polypeptide reads, in one-letter code: MESITRVSMSVCPFVKSSSAQALRQLSKNSALTSQARQCPFMGAALNAKESTRSYSSATKPVRATASSLASNPPSTMQSKYSFKAEELVGNKDAINLESKENTFDFKGYLNSELSKKRTDKSYRFFNNINRLANEFPKAHRSEENDKVTVWCSNDYLGMGKNENTINEMKRVLTKYGSGAGGTRNIAGHNIHALKLESELAALHKHEAALVFSSCFVANDAVLSLFGQKIKDLVIFSDELNHASMIQGIRNSRAKKQVFKHNDLADLEEKLAQYPKSTPKLIAFESVYSMCGSIAPIEAICDLAEKYGALTFLDEVHAVGMYGPHGAGVAEHLDFDAHLKSGIASPQTQTVMNRVDMVTGTLGKAYGTVGGYITGKANLIDWFRSFAPGFIFTTTLPPSIMAGSSASIRYQRSTLQDRIAQQTNTRYVKNNLTDIGIPVIPNPSHIVPVLVGNALDAKKASDLLLDKYNIYVQAINFPTVPIGQERLRITPTPGHGPELSNQLIGALDSVFNELSLSRIGDWEGKGGLCGVGEPDIEPIEHIWTSEQLALTDADINPNVIDPVIQPIGVSSGVRD.

The N-terminal 55 residues, M1–Y55, are a transit peptide targeting the mitochondrion. The substrate site is built by R124, S237, and K256. Pyridoxal 5'-phosphate is bound by residues S289, H317, and T361. The active site involves K364. N6-(pyridoxal phosphate)lysine is present on K364. The pyridoxal 5'-phosphate site is built by T393 and T394. T479 provides a ligand contact to substrate.

The protein belongs to the class-II pyridoxal-phosphate-dependent aminotransferase family. In terms of assembly, homodimer. Pyridoxal 5'-phosphate is required as a cofactor.

It localises to the mitochondrion matrix. It carries out the reaction succinyl-CoA + glycine + H(+) = 5-aminolevulinate + CO2 + CoA. The protein operates within porphyrin-containing compound metabolism; protoporphyrin-IX biosynthesis; 5-aminolevulinate from glycine: step 1/1. Its function is as follows. Catalyzes the synthesis of 5-aminolevulinate (ALA) from succinyl-CoA and glycine, the first and rate-limiting step in heme biosynthesis. This chain is 5-aminolevulinate synthase, mitochondrial (HEM1), found in Debaryomyces hansenii (strain ATCC 36239 / CBS 767 / BCRC 21394 / JCM 1990 / NBRC 0083 / IGC 2968) (Yeast).